A 334-amino-acid polypeptide reads, in one-letter code: Phenazine-1-carboxylate N-methyltransferase (334 aa).

Residues Asp198 and Arg241 each coordinate S-adenosyl-L-methionine.

This sequence belongs to the class I-like SAM-binding methyltransferase superfamily. Cation-independent O-methyltransferase family. As to quaternary structure, homodimer in solution. Probably interacts transiently with PhzS.

The enzyme catalyses phenazine-1-carboxylate + S-adenosyl-L-methionine = 5-methyl-phenazine-1-carboxylate + S-adenosyl-L-homocysteine. It participates in secondary metabolite biosynthesis; pyocyanine biosynthesis. Its activity is regulated as follows. In vitro, requires PhzS for activity. In terms of biological role, involved in the biosynthesis of pyocyanine, a blue-pigmented phenazine derivative, which plays a role in virulence. Converts phenazine-1-carboxylate (PCA) to 5-methylphenazine-1-carboxylate (5-methyl-PCA). This Pseudomonas aeruginosa (strain ATCC 15692 / DSM 22644 / CIP 104116 / JCM 14847 / LMG 12228 / 1C / PRS 101 / PAO1) protein is Phenazine-1-carboxylate N-methyltransferase.